The following is a 108-amino-acid chain: Peptidyl-prolyl cis-trans isomerase FKBP1B (108 aa).

In terms of domain architecture, PPIase FKBP-type spans 20 to 108 (GQTCVVHYTG…IFDVELLNLE (89 aa)).

In terms of assembly, identified in a complex composed of RYR2, FKBP1B, PKA catalytic subunit, PRKAR2A, AKAP6, and the protein phosphatases PP2A and PP1. Interacts directly with RYR2.

It is found in the cytoplasm. The protein resides in the sarcoplasmic reticulum. The catalysed reaction is [protein]-peptidylproline (omega=180) = [protein]-peptidylproline (omega=0). With respect to regulation, inhibited by both FK506 and rapamycin. Functionally, has the potential to contribute to the immunosuppressive and toxic effects of FK506 and rapamycin. PPIases accelerate the folding of proteins. It catalyzes the cis-trans isomerization of proline imidic peptide bonds in oligopeptides. This chain is Peptidyl-prolyl cis-trans isomerase FKBP1B (FKBP1B), found in Bos taurus (Bovine).